A 194-amino-acid chain; its full sequence is Imidazoleglycerol-phosphate dehydratase (194 aa).

Belongs to the imidazoleglycerol-phosphate dehydratase family.

The protein localises to the cytoplasm. The enzyme catalyses D-erythro-1-(imidazol-4-yl)glycerol 3-phosphate = 3-(imidazol-4-yl)-2-oxopropyl phosphate + H2O. Its pathway is amino-acid biosynthesis; L-histidine biosynthesis; L-histidine from 5-phospho-alpha-D-ribose 1-diphosphate: step 6/9. The chain is Imidazoleglycerol-phosphate dehydratase from Thermus thermophilus (strain ATCC 27634 / DSM 579 / HB8).